We begin with the raw amino-acid sequence, 152 residues long: SsrA-binding protein (152 aa).

It belongs to the SmpB family.

It is found in the cytoplasm. In terms of biological role, required for rescue of stalled ribosomes mediated by trans-translation. Binds to transfer-messenger RNA (tmRNA), required for stable association of tmRNA with ribosomes. tmRNA and SmpB together mimic tRNA shape, replacing the anticodon stem-loop with SmpB. tmRNA is encoded by the ssrA gene; the 2 termini fold to resemble tRNA(Ala) and it encodes a 'tag peptide', a short internal open reading frame. During trans-translation Ala-aminoacylated tmRNA acts like a tRNA, entering the A-site of stalled ribosomes, displacing the stalled mRNA. The ribosome then switches to translate the ORF on the tmRNA; the nascent peptide is terminated with the 'tag peptide' encoded by the tmRNA and targeted for degradation. The ribosome is freed to recommence translation, which seems to be the essential function of trans-translation. This is SsrA-binding protein from Helicobacter pylori (strain J99 / ATCC 700824) (Campylobacter pylori J99).